We begin with the raw amino-acid sequence, 160 residues long: MELLSLAILSSFFAVANQCAATSPVTSPTTTTTEASVTTTIATSTSTTTVTTTTTVVTAACATCTTAQIGIITGNDGDMTPTSAITTDASGCSVITYTCERTPNVETDIVLITFYSDSQTPTDVGTENGVGTANVVMNCVNGEWVKDGIVINDVECQIIT.

The first 18 residues, 1 to 18 (MELLSLAILSSFFAVANQ), serve as a signal peptide directing secretion.

This is an uncharacterized protein from Caenorhabditis elegans.